A 129-amino-acid chain; its full sequence is UPF0102 protein CT2262 (129 aa).

It belongs to the UPF0102 family.

The protein is UPF0102 protein CT2262 of Chlorobaculum tepidum (strain ATCC 49652 / DSM 12025 / NBRC 103806 / TLS) (Chlorobium tepidum).